We begin with the raw amino-acid sequence, 410 residues long: Adenosylhomocysteinase (410 aa).

Substrate contacts are provided by Asp117 and Glu142. Residue 143–145 coordinates NAD(+); the sequence is TTT. 2 residues coordinate substrate: Lys172 and Asp176. NAD(+)-binding positions include Asn177, 206–211, Glu229, 285–287, and Asn332; these read GYGYCG and AGH.

This sequence belongs to the adenosylhomocysteinase family. Requires NAD(+) as cofactor.

The protein localises to the cytoplasm. The catalysed reaction is S-adenosyl-L-homocysteine + H2O = L-homocysteine + adenosine. Its pathway is amino-acid biosynthesis; L-homocysteine biosynthesis; L-homocysteine from S-adenosyl-L-homocysteine: step 1/1. Its function is as follows. May play a key role in the regulation of the intracellular concentration of adenosylhomocysteine. In Thermoplasma acidophilum (strain ATCC 25905 / DSM 1728 / JCM 9062 / NBRC 15155 / AMRC-C165), this protein is Adenosylhomocysteinase.